The primary structure comprises 360 residues: Peptide chain release factor 1 (360 aa).

N5-methylglutamine is present on Gln-234.

The protein belongs to the prokaryotic/mitochondrial release factor family. Post-translationally, methylated by PrmC. Methylation increases the termination efficiency of RF1.

It localises to the cytoplasm. Its function is as follows. Peptide chain release factor 1 directs the termination of translation in response to the peptide chain termination codons UAG and UAA. This chain is Peptide chain release factor 1, found in Clostridium botulinum (strain Eklund 17B / Type B).